Consider the following 60-residue polypeptide: Large ribosomal subunit protein bL32 (60 aa).

Belongs to the bacterial ribosomal protein bL32 family.

The sequence is that of Large ribosomal subunit protein bL32 from Latilactobacillus sakei subsp. sakei (strain 23K) (Lactobacillus sakei subsp. sakei).